The primary structure comprises 512 residues: MPKKNKPAAKGPFYFFMMEFKEQEEAAGYRFSGLAEVTEKAGPHWEKLAPHEREPYNQRAKQNKANPKEAGGYGERYTAQGKPFSQVQAEAAKRRQLEEQIQKRIVEMIQTASANNALGELEVYFVSCNYFCVSLSGEYVPAELAIIKYSLNDGVMDSLNVLINPTDLPLGMALDAKTHSSSTHQLPVPPDALGEANYEKILRQILKFFKNTSGSKVVPPIFTWNKDIPMVDSILRGILEATDLDYVKFSILPLIDFFYNLKLATEDYGLDIKTFPSIHLAKALLEKDVYAYTAGIACDVHEQLNNQVACALSRVVRWAYVISDSCCLDVGIEMEKGRHLPHNMTTLSDITGTVSALSSRMSKLTTTSDNNRSKMSRPRSTDRTDRDVTTTTIYSSRAGTVTGKPSTIVPQQPASSGGTRAANDTFNTTNPFYAMQMAQSANRSPTKKNPWSRENKLTEVRDPQSDTETSMLMLAPVAGRGRGTLARMNAAGRGRAQDLCTTVKTVGRGHLN.

Positions 9–75 (AKGPFYFFMM…NPKEAGGYGE (67 aa)) form a DNA-binding region, HMG box. Disordered regions lie at residues 49-72 (APHE…EAGG), 360-421 (RMSK…GTRA), and 439-465 (QSAN…DPQS). The segment covering 360-370 (RMSKLTTTSDN) has biased composition (polar residues). Positions 379 to 388 (RSTDRTDRDV) are enriched in basic and acidic residues. Polar residues-rich tracts occupy residues 393-421 (IYSS…GTRA) and 439-449 (QSANRSPTKKN). Over residues 451–464 (WSRENKLTEVRDPQ) the composition is skewed to basic and acidic residues.

This sequence belongs to the maelstrom family.

It localises to the cytoplasm. The protein localises to the nucleus. Its function is as follows. Plays a central role during gametogenesis by repressing transposable elements and preventing their mobilization, which is essential for the germline integrity. Probably acts via the piRNA metabolic process, which mediates the repression of transposable elements during meiosis by forming complexes composed of piRNAs and Piwi proteins and governs the repression of transposons. The sequence is that of Protein maelstrom homolog (mael) from Culex quinquefasciatus (Southern house mosquito).